The sequence spans 252 residues: Phosphoglycolate phosphatase (252 aa).

Aspartate 13 serves as the catalytic Nucleophile. The Mg(2+) site is built by aspartate 13, aspartate 15, and aspartate 192.

Belongs to the HAD-like hydrolase superfamily. CbbY/CbbZ/Gph/YieH family. As to quaternary structure, monomer. Requires Mg(2+) as cofactor. The cofactor is chloride.

The enzyme catalyses 2-phosphoglycolate + H2O = glycolate + phosphate. The protein operates within organic acid metabolism; glycolate biosynthesis; glycolate from 2-phosphoglycolate: step 1/1. In terms of biological role, specifically catalyzes the dephosphorylation of 2-phosphoglycolate. Is involved in the dissimilation of the intracellular 2-phosphoglycolate formed during the DNA repair of 3'-phosphoglycolate ends, a major class of DNA lesions induced by oxidative stress. The sequence is that of Phosphoglycolate phosphatase from Salmonella typhi.